A 174-amino-acid chain; its full sequence is Protein PopB (174 aa).

The interval 1–174 is disordered; that stretch reads MSHSKIKAGG…EAMKIKDDDD (174 aa). The segment covering 50 to 65 has biased composition (polar residues); the sequence is LNKSNLGSDSQTWTPG. Over residues 66-78 the composition is skewed to low complexity; it reads STMVSLKSRSSSS. The span at 79 to 89 shows a compositional bias: basic and acidic residues; that stretch reads HKPDTGGDTKP. Residues 147 to 161 are compositionally biased toward low complexity; it reads IALQRAIQRQTQTRQ. Residues 162-174 show a composition bias toward basic and acidic residues; sequence KMQEAMKIKDDDD.

The protein resides in the secreted. In terms of biological role, probably involved in host-pathogen interactions. This is Protein PopB (popB) from Ralstonia nicotianae (strain ATCC BAA-1114 / GMI1000) (Ralstonia solanacearum).